Consider the following 432-residue polypeptide: Metacaspase-1 (432 aa).

2 stretches are compositionally biased toward low complexity: residues 1–14 and 29–59; these read MYPGSGRYTYNNAG and QQYGQQYGQQYEQQYGQQYGQQNDQQFSQQY. Positions 1 to 70 are disordered; it reads MYPGSGRYTY…PPPGPPPMAY (70 aa). The span at 60–70 shows a compositional bias: pro residues; it reads APPPGPPPMAY. Catalysis depends on residues histidine 220 and cysteine 276.

The protein belongs to the peptidase C14B family.

Its subcellular location is the cytoplasm. It is found in the nucleus. In terms of biological role, mediates cell death (apoptosis) triggered by oxygen stress, salt stress or chronological aging. Regulated cell death can prevent a release of toxic cellular components, thus avoiding necrotic collapse of the colony, and can also provide nutrients for healthy cells. Therefore, regulated cell death in yeast colonies can be as important for their development as are apoptosis and related processes that occur within metazoa. The sequence is that of Metacaspase-1 (MCA1) from Saccharomyces cerevisiae (strain YJM789) (Baker's yeast).